The sequence spans 457 residues: Siroheme synthase (457 aa).

Residues 1 to 204 are precorrin-2 dehydrogenase /sirohydrochlorin ferrochelatase; it reads MDHLPIFCQL…ADEKAVNATT (204 aa). NAD(+) contacts are provided by residues 22–23 and 43–44; these read DV and LT. Ser128 bears the Phosphoserine mark. A uroporphyrinogen-III C-methyltransferase region spans residues 216–457; it reads GEVVLVGAGP…RDKLNWFSNH (242 aa). S-adenosyl-L-methionine is bound at residue Pro225. The active-site Proton acceptor is the Asp248. Lys270 functions as the Proton donor in the catalytic mechanism. S-adenosyl-L-methionine-binding positions include 301–303, Ile306, 331–332, Met382, and Gly411; these read GGD and TA.

This sequence in the N-terminal section; belongs to the precorrin-2 dehydrogenase / sirohydrochlorin ferrochelatase family. In the C-terminal section; belongs to the precorrin methyltransferase family.

The catalysed reaction is uroporphyrinogen III + 2 S-adenosyl-L-methionine = precorrin-2 + 2 S-adenosyl-L-homocysteine + H(+). It catalyses the reaction precorrin-2 + NAD(+) = sirohydrochlorin + NADH + 2 H(+). The enzyme catalyses siroheme + 2 H(+) = sirohydrochlorin + Fe(2+). It participates in cofactor biosynthesis; adenosylcobalamin biosynthesis; precorrin-2 from uroporphyrinogen III: step 1/1. It functions in the pathway cofactor biosynthesis; adenosylcobalamin biosynthesis; sirohydrochlorin from precorrin-2: step 1/1. The protein operates within porphyrin-containing compound metabolism; siroheme biosynthesis; precorrin-2 from uroporphyrinogen III: step 1/1. Its pathway is porphyrin-containing compound metabolism; siroheme biosynthesis; siroheme from sirohydrochlorin: step 1/1. It participates in porphyrin-containing compound metabolism; siroheme biosynthesis; sirohydrochlorin from precorrin-2: step 1/1. Multifunctional enzyme that catalyzes the SAM-dependent methylations of uroporphyrinogen III at position C-2 and C-7 to form precorrin-2 via precorrin-1. Then it catalyzes the NAD-dependent ring dehydrogenation of precorrin-2 to yield sirohydrochlorin. Finally, it catalyzes the ferrochelation of sirohydrochlorin to yield siroheme. In Salmonella typhi, this protein is Siroheme synthase.